Reading from the N-terminus, the 326-residue chain is Olfactory receptor 11H2 (326 aa).

Topologically, residues 1-44 (MCPLTLHVTGLMNVSEPNSSFAFVNEFILQGFSCEWTIQIFLFS) are extracellular. 2 N-linked (GlcNAc...) asparagine glycosylation sites follow: Asn13 and Asn18. A helical membrane pass occupies residues 45–65 (LFTTIYALTITGNGAIAFVLW). The Cytoplasmic portion of the chain corresponds to 66–72 (CDRRLHT). Residues 73–93 (PMYMFLGNFSFLEIWYVSSTV) form a helical membrane-spanning segment. The Extracellular segment spans residues 94–112 (PKMLVNFLSEKKNISFAGC). An N-linked (GlcNAc...) asparagine glycan is attached at Asn106. A disulfide bond links Cys112 and Cys194. Residues 113-133 (FLQFYFFFSLGTSECLLLTVM) form a helical membrane-spanning segment. The Cytoplasmic portion of the chain corresponds to 134-158 (AFDQYLAICRPLLYPNIMTGHLYAK). The helical transmembrane segment at 159-179 (LVILCWVCGFLWFLIPIVLIS) threads the bilayer. The Extracellular portion of the chain corresponds to 180–216 (QKPFCGPNIIDHVVCDPGPLFALDCVSAPRIQLFCYT). A helical membrane pass occupies residues 217 to 237 (LSSLVIFGNFLFIIGSYTLVL). The Cytoplasmic portion of the chain corresponds to 238–259 (KAVLGMPSSTGRHKAFSTCGSH). Residues 260-280 (LAVVSLCYSPLMVMYVSPGLG) traverse the membrane as a helical segment. Topologically, residues 281 to 287 (HSTGMQK) are extracellular. Residues 288-308 (IETLFYAMVTPLFNPLIYSLQ) form a helical membrane-spanning segment. The Cytoplasmic portion of the chain corresponds to 309–326 (NKEIKAALRKVLGSSNII).

It belongs to the G-protein coupled receptor 1 family.

It is found in the cell membrane. Its function is as follows. Odorant receptor. This chain is Olfactory receptor 11H2 (OR11H2), found in Homo sapiens (Human).